The sequence spans 723 residues: F-box protein MAX2 homolog B (723 aa).

One can recognise an F-box domain in the interval 2 to 55 (AKTPIPFTTLNDLPDVILSNIIAAVSDTRSRNATALVCHKWLVLERSTRTSLTL).

As to quaternary structure, part of a putative SCF (SKP1/Cullin/F-box) ubiquitin ligase complex. Interacts with KAI2IA in the presence of (-)-germacrene D. Mainly expressed in fully expanded leaves, lateral roots, axillary and shoot apex, and, to a lower extent, in internodes and nodes.

It localises to the nucleus. The protein resides in the cytoplasm. In terms of biological role, component of SCF(ASK-cullin-F-box) E3 ubiquitin ligase complexes, which may mediate the ubiquitination and subsequent proteasomal degradation of target proteins. Is necessary for responses to strigolactones and may be involved in the ubiquitin-mediated degradation of specific proteins that activate axillary growth. Targets probably SMAX1A to degradation upon the formation of an E3 SCF ubiquitin ligase complex (ASK-cullin-F-box) containing MAX2B and KAI2IA in response to (-)-germacrene D in the stigma. The sequence is that of F-box protein MAX2 homolog B from Petunia hybrida (Petunia).